Reading from the N-terminus, the 211-residue chain is HTH-type transcriptional repressor FabR (211 aa).

One can recognise an HTH tetR-type domain in the interval 10–70 (RTRRSLVEAA…TMVDESGLML (61 aa)). The H-T-H motif DNA-binding region spans 33–52 (SLREVAREAGIAPTSFYRHF).

Homodimer.

The protein resides in the cytoplasm. Its function is as follows. Represses the transcription of fabB, involved in unsaturated fatty acid (UFA) biosynthesis. By controlling UFA production, FabR directly influences the physical properties of the membrane bilayer. The chain is HTH-type transcriptional repressor FabR from Cronobacter sakazakii (strain ATCC BAA-894) (Enterobacter sakazakii).